The sequence spans 625 residues: PTS system beta-glucoside-specific EIIBCA component (625 aa).

Residues 1–84 (MTELARKIVA…NSVAGLDEKA (84 aa)) form the PTS EIIB type-1 domain. Residues 1-99 (MTELARKIVA…NDDKGNLLNR (99 aa)) are Periplasmic-facing. Residue cysteine 24 is the Phosphocysteine intermediate; for EIIB activity of the active site. A helical membrane pass occupies residues 100-120 (FVYVISGIFTPLIGLMAATGI). One can recognise a PTS EIIC type-1 domain in the interval 102–465 (YVISGIFTPL…RQPAQGAPQE (364 aa)). Over 121-140 (LKGMLALALTFQWTTEQSGT) the chain is Cytoplasmic. Residues 141–161 (YLILFSASDALFWFFPIILGY) traverse the membrane as a helical segment. Residues 162–166 (TAGKR) lie on the Periplasmic side of the membrane. The chain crosses the membrane as a helical span at residues 167–187 (FGGNPFTAMVIGGALVHPLIL). Residues 188–202 (TAFENGQKADALGLD) lie on the Cytoplasmic side of the membrane. Residues 203 to 223 (FLGIPVTLLNYSSSVIPIIFS) traverse the membrane as a helical segment. Topologically, residues 224–244 (AWLCSILERRLNAWLPSAIKN) are periplasmic. The helical transmembrane segment at 245-265 (FFTPLLCLMVITPVTFLLVGP) threads the bilayer. Residues 266-284 (LSTWISELIAAGYLWLYQA) are Cytoplasmic-facing. The helical transmembrane segment at 285–305 (VPAFAGAVMGGFWQIFVMFGL) threads the bilayer. Over 306–324 (HWGLVPLCINNFTVLGYDT) the chain is Periplasmic. A helical membrane pass occupies residues 325–345 (MIPLLMPAIMAQVGAALGVFL). At 346–353 (CERDAQKK) the chain is on the cytoplasmic side. Residues 354 to 374 (VVAGSAALTSLFGITEPAVYG) traverse the membrane as a helical segment. Residues 375-380 (VNLPRK) lie on the Periplasmic side of the membrane. A helical membrane pass occupies residues 381-401 (YPFVIACISGALGATIIGYAQ). The Cytoplasmic segment spans residues 402–403 (TK). Residues 404–424 (VYSFGLPSIFTFMQTIPSTGI) traverse the membrane as a helical segment. Residues 425–431 (DFTVWAS) lie on the Periplasmic side of the membrane. A helical transmembrane segment spans residues 432–452 (VIGGVIAIGCAFVGTVMLHFI). Residues 453 to 625 (TAKRQPAQGA…AGEPLLSIIR (173 aa)) are Cytoplasmic-facing. A PTS EIIA type-1 domain is found at 495–599 (DTTFASGLLG…DLTTPVLISN (105 aa)). Histidine 547 acts as the Tele-phosphohistidine intermediate; for EIIA activity in catalysis.

It localises to the cell inner membrane. In terms of biological role, the phosphoenolpyruvate-dependent sugar phosphotransferase system (sugar PTS), a major carbohydrate active -transport system, catalyzes the phosphorylation of incoming sugar substrates concomitantly with their translocation across the cell membrane. This system is involved in beta-glucoside transport. Acts both as a kinase and as a phosphatase on BglG. This chain is PTS system beta-glucoside-specific EIIBCA component (bglF), found in Escherichia coli (strain K12).